Reading from the N-terminus, the 486-residue chain is Shugoshin-1 (486 aa).

Positions Ile-71–Lys-154 form a coiled coil. 6 disordered regions span residues Met-137 to Thr-163, Tyr-187 to Glu-209, His-222 to Asn-251, Ala-323 to Ser-346, Pro-382 to Pro-403, and Thr-418 to Ala-467. A compositionally biased stretch (basic and acidic residues) spans Glu-331–Ser-346. Residues Gln-387 to Ser-396 show a composition bias toward basic residues. The segment covering Ala-423–Gln-433 has biased composition (polar residues).

This sequence belongs to the shugoshin family. Highly expressed in roots. Expressed in panicles. Expressed at low levels in leaves.

The protein localises to the nucleus. It is found in the nucleolus. It localises to the chromosome. Its subcellular location is the centromere. Its function is as follows. Plays a central role in chromosome cohesion during meiosis I by preventing premature dissociation of cohesin complex from centromeres after prophase, when most of cohesin complex dissociates from chromosomes arms. Required for the timely assembly and maintenance of synaptonemal complex (SC) during early prophase I. Required for maintenance of centromeric cohesion before prophase II and correct segregation of chromatids during meiosis II. Has apparently no function in mitosis. This Oryza sativa subsp. japonica (Rice) protein is Shugoshin-1.